The sequence spans 504 residues: WD repeat-containing protein 55 homolog (504 aa).

Disordered regions lie at residues 1–21 (MDRH…DIDD) and 33–132 (QEVL…DDDD). 2 stretches are compositionally biased toward acidic residues: residues 12–21 (NEDELDDIDD) and 33–48 (QEVL…EYDL). Residues 63 to 74 (SSSNESISSDGS) are compositionally biased toward low complexity. The span at 78 to 89 (NAEDSDSDDSMI) shows a compositional bias: acidic residues. 6 WD repeats span residues 156–195 (KLED…NKLL), 200–239 (VHAK…LKKL), 243–281 (AHDD…AIFE), 284–323 (EVED…LYVQ), 326–365 (PYEE…YHCD), and 410–449 (QHNM…DFGD). Positions 477–504 (FFADMTKDQDDDDNDGGNDTAAGPSNVT) are disordered.

This sequence belongs to the WD repeat WDR55 family.

The polypeptide is WD repeat-containing protein 55 homolog (Drosophila virilis (Fruit fly)).